A 355-amino-acid polypeptide reads, in one-letter code: Guanine nucleotide-binding protein G(z) subunit alpha (355 aa).

Residues 1 to 14 (MGCRQSSEEKEAAR) are compositionally biased toward basic and acidic residues. The tract at residues 1-26 (MGCRQSSEEKEAARRSRRIDRHLRSE) is disordered. A lipid anchor (N-myristoyl glycine) is attached at Gly2. A lipid anchor (S-palmitoyl cysteine) is attached at Cys3. The region spanning 32–355 (REIKLLLLGT…QNNLKYIGLC (324 aa)) is the G-alpha domain. Residues 35-48 (KLLLLGTSNSGKST) form a G1 motif region. Residues 40-47 (GTSNSGKS), 176-182 (LRSRDMT), 201-205 (DVGGQ), 270-273 (NKKD), and Ala327 contribute to the GTP site. 2 residues coordinate Mg(2+): Ser47 and Thr182. A G2 motif region spans residues 174-182 (DILRSRDMT). Residues 197–206 (FKMVDVGGQR) are G3 motif. Residues 266–273 (ILFLNKKD) are G4 motif. The interval 325 to 330 (TCATDT) is G5 motif.

It belongs to the G-alpha family. G(i/o/t/z) subfamily. As to quaternary structure, G-proteins are composed of 3 units; alpha, beta and gamma. The alpha chain contains the guanine nucleotide binding site. Interacts with ADGRB2.

The protein resides in the membrane. In terms of biological role, guanine nucleotide-binding proteins (G proteins) are involved as modulators or transducers in various transmembrane signaling systems. This chain is Guanine nucleotide-binding protein G(z) subunit alpha (Gnaz), found in Mus musculus (Mouse).